The chain runs to 196 residues: Probable nicotinate-nucleotide adenylyltransferase (196 aa).

It belongs to the NadD family.

It catalyses the reaction nicotinate beta-D-ribonucleotide + ATP + H(+) = deamido-NAD(+) + diphosphate. It functions in the pathway cofactor biosynthesis; NAD(+) biosynthesis; deamido-NAD(+) from nicotinate D-ribonucleotide: step 1/1. Its function is as follows. Catalyzes the reversible adenylation of nicotinate mononucleotide (NaMN) to nicotinic acid adenine dinucleotide (NaAD). In Thermotoga sp. (strain RQ2), this protein is Probable nicotinate-nucleotide adenylyltransferase.